The sequence spans 336 residues: Holliday junction branch migration complex subunit RuvB (336 aa).

Residues 4–184 (ADRLVAPGSI…FGIVQRLEFY (181 aa)) form a large ATPase domain (RuvB-L) region. Residues Ile-23, Arg-24, Gly-65, Lys-68, Thr-69, Thr-70, 131–133 (EDY), Arg-174, Tyr-184, and Arg-221 contribute to the ATP site. Thr-69 is a Mg(2+) binding site. Residues 185–255 (QVADLQHIVS…VASQALDMLN (71 aa)) form a small ATPAse domain (RuvB-S) region. A head domain (RuvB-H) region spans residues 258–336 (AEGFDYMDRK…HFGITPPQMP (79 aa)). The DNA site is built by Arg-294, Arg-313, and Arg-318.

It belongs to the RuvB family. In terms of assembly, homohexamer. Forms an RuvA(8)-RuvB(12)-Holliday junction (HJ) complex. HJ DNA is sandwiched between 2 RuvA tetramers; dsDNA enters through RuvA and exits via RuvB. An RuvB hexamer assembles on each DNA strand where it exits the tetramer. Each RuvB hexamer is contacted by two RuvA subunits (via domain III) on 2 adjacent RuvB subunits; this complex drives branch migration. In the full resolvosome a probable DNA-RuvA(4)-RuvB(12)-RuvC(2) complex forms which resolves the HJ.

It is found in the cytoplasm. It catalyses the reaction ATP + H2O = ADP + phosphate + H(+). The RuvA-RuvB-RuvC complex processes Holliday junction (HJ) DNA during genetic recombination and DNA repair, while the RuvA-RuvB complex plays an important role in the rescue of blocked DNA replication forks via replication fork reversal (RFR). RuvA specifically binds to HJ cruciform DNA, conferring on it an open structure. The RuvB hexamer acts as an ATP-dependent pump, pulling dsDNA into and through the RuvAB complex. RuvB forms 2 homohexamers on either side of HJ DNA bound by 1 or 2 RuvA tetramers; 4 subunits per hexamer contact DNA at a time. Coordinated motions by a converter formed by DNA-disengaged RuvB subunits stimulates ATP hydrolysis and nucleotide exchange. Immobilization of the converter enables RuvB to convert the ATP-contained energy into a lever motion, pulling 2 nucleotides of DNA out of the RuvA tetramer per ATP hydrolyzed, thus driving DNA branch migration. The RuvB motors rotate together with the DNA substrate, which together with the progressing nucleotide cycle form the mechanistic basis for DNA recombination by continuous HJ branch migration. Branch migration allows RuvC to scan DNA until it finds its consensus sequence, where it cleaves and resolves cruciform DNA. The polypeptide is Holliday junction branch migration complex subunit RuvB (Cronobacter sakazakii (strain ATCC BAA-894) (Enterobacter sakazakii)).